We begin with the raw amino-acid sequence, 551 residues long: Gliomedin (551 aa).

Residues 1–17 (MARGAEGGRGDAGWGLR) are Cytoplasmic-facing. Residues 18–39 (GALAAVALLSALNAAGTVFALC) form a helical; Signal-anchor for type II membrane protein membrane-spanning segment. The Extracellular portion of the chain corresponds to 40-551 (QWRGLSSALR…VQFLSTTLNQ (512 aa)). The interval 72-107 (LSRAPRGASAPPQDPASSARNKRSHSGEPAPHIRAE) is disordered. A compositionally biased stretch (low complexity) spans 79–90 (ASAPPQDPASSA). N-linked (GlcNAc...) asparagine glycosylation is present at N130. Collagen-like domains lie at 137–195 (LTGP…RGEK) and 196–222 (GDHG…KGDV). Residues 139–282 (GPSGPPGPPG…GETCAIPNDD (144 aa)) are disordered. Composition is skewed to basic and acidic residues over residues 191–200 (ERGEKGDHGE) and 213–222 (KGEKGDKGDV). Positions 237–253 (PPGPPGPPGPPGPPGPP) are enriched in pro residues. In terms of domain architecture, Olfactomedin-like spans 299–546 (QAESMITSIG…LMLYPVQFLS (248 aa)). N-linked (GlcNAc...) asparagine glycosylation is found at N329, N357, N378, and N464.

As to quaternary structure, homotrimer (via collagen-like domains). Interacts with NRCAM and NFASC/neurofascin. Interaction with glial NRCAM enhances interaction with axonal NFASC. Interacts with MYOC. In terms of processing, N-glycosylated. Post-translationally, proteolytic processing by a furin-like protease causes shedding of the ectodomain. Further cleavage by BMP1 releases the olfactomedin-like domain. Specifically expressed in spinal cord, brain, placenta and sciatic nerve. More abundant in peripheral than central nervous system.

It localises to the cell membrane. Its subcellular location is the cell projection. It is found in the axon. The protein localises to the secreted. The protein resides in the extracellular space. It localises to the extracellular matrix. In terms of biological role, ligand for NRCAM and NFASC/neurofascin that plays a role in the formation and maintenance of the nodes of Ranvier on myelinated axons. Mediates interaction between Schwann cell microvilli and axons via its interactions with NRCAM and NFASC. Nodes of Ranvier contain clustered sodium channels that are crucial for the saltatory propagation of action potentials along myelinated axons. During development, nodes of Ranvier are formed by the fusion of two heminodes. Required for normal clustering of sodium channels at heminodes; not required for the formation of mature nodes with normal sodium channel clusters. Required, together with NRCAM, for maintaining NFASC and sodium channel clusters at mature nodes of Ranvier. This is Gliomedin (GLDN) from Homo sapiens (Human).